The following is a 147-amino-acid chain: Hemoglobin subunit beta (147 aa).

An N-acetylvaline modification is found at V2. One can recognise a Globin domain in the interval 3–147 (HLSAEEKGHI…VATALAHKYH (145 aa)). The residue at position 60 (K60) is an N6-acetyllysine. H64 serves as a coordination point for heme b. Position 83 is an N6-acetyllysine (K83). H93 serves as a coordination point for heme b. Residue C94 is modified to S-nitrosocysteine. N6-acetyllysine is present on K145.

The protein belongs to the globin family. Heterotetramer of two alpha chains and two beta chains. As to expression, red blood cells.

Involved in oxygen transport from the lung to the various peripheral tissues. In Sminthopsis crassicaudata (Fat-tailed dunnart), this protein is Hemoglobin subunit beta (HBB).